The primary structure comprises 360 residues: Phospho-N-acetylmuramoyl-pentapeptide-transferase (360 aa).

A run of 10 helical transmembrane segments spans residues 27-47 (GAVM…IEWL), 73-93 (TMGG…WADL), 98-118 (VWAV…DDYL), 134-154 (LVAQ…LGQG), 168-188 (LTFN…VGAS), 199-219 (GLAI…AYLV), 239-259 (LAVF…FNAP), 263-283 (VFMG…VSVV), 288-308 (IVLA…IVQV), and 337-357 (TVVI…LSTL).

The protein belongs to the glycosyltransferase 4 family. MraY subfamily. It depends on Mg(2+) as a cofactor.

It is found in the cell inner membrane. The enzyme catalyses UDP-N-acetyl-alpha-D-muramoyl-L-alanyl-gamma-D-glutamyl-meso-2,6-diaminopimeloyl-D-alanyl-D-alanine + di-trans,octa-cis-undecaprenyl phosphate = di-trans,octa-cis-undecaprenyl diphospho-N-acetyl-alpha-D-muramoyl-L-alanyl-D-glutamyl-meso-2,6-diaminopimeloyl-D-alanyl-D-alanine + UMP. Its pathway is cell wall biogenesis; peptidoglycan biosynthesis. Its function is as follows. Catalyzes the initial step of the lipid cycle reactions in the biosynthesis of the cell wall peptidoglycan: transfers peptidoglycan precursor phospho-MurNAc-pentapeptide from UDP-MurNAc-pentapeptide onto the lipid carrier undecaprenyl phosphate, yielding undecaprenyl-pyrophosphoryl-MurNAc-pentapeptide, known as lipid I. The chain is Phospho-N-acetylmuramoyl-pentapeptide-transferase from Rhodospirillum rubrum (strain ATCC 11170 / ATH 1.1.1 / DSM 467 / LMG 4362 / NCIMB 8255 / S1).